The primary structure comprises 344 residues: Phosphate acyltransferase (344 aa).

The protein belongs to the PlsX family. Homodimer. Probably interacts with PlsY.

It is found in the cytoplasm. It catalyses the reaction a fatty acyl-[ACP] + phosphate = an acyl phosphate + holo-[ACP]. The protein operates within lipid metabolism; phospholipid metabolism. Functionally, catalyzes the reversible formation of acyl-phosphate (acyl-PO(4)) from acyl-[acyl-carrier-protein] (acyl-ACP). This enzyme utilizes acyl-ACP as fatty acyl donor, but not acyl-CoA. The polypeptide is Phosphate acyltransferase (Yersinia pestis bv. Antiqua (strain Antiqua)).